Here is a 316-residue protein sequence, read N- to C-terminus: Methionyl-tRNA formyltransferase (316 aa).

(6S)-5,6,7,8-tetrahydrofolate is bound at residue 108–111 (SLLP).

This sequence belongs to the Fmt family.

The catalysed reaction is L-methionyl-tRNA(fMet) + (6R)-10-formyltetrahydrofolate = N-formyl-L-methionyl-tRNA(fMet) + (6S)-5,6,7,8-tetrahydrofolate + H(+). Its function is as follows. Attaches a formyl group to the free amino group of methionyl-tRNA(fMet). The formyl group appears to play a dual role in the initiator identity of N-formylmethionyl-tRNA by promoting its recognition by IF2 and preventing the misappropriation of this tRNA by the elongation apparatus. This is Methionyl-tRNA formyltransferase from Heliobacterium modesticaldum (strain ATCC 51547 / Ice1).